Consider the following 1804-residue polypeptide: Obscurin-like protein 1 (1804 aa).

Ser-10 carries the phosphoserine modification. 4 consecutive Ig-like domains span residues 12–100, 128–225, 241–330, and 339–425; these read PCFL…AAVT, PKFL…ALLQ, PKPV…QTLS, and PRLR…ANVT. Residues 17-19 are interaction with TTN; sequence FPR. Residues Cys-33 and Cys-84 are joined by a disulfide bond. The interval 85–94 is interaction with TTN; sequence RARNAAGEAY. A disulfide bridge links Cys-149 with Cys-209. The interval 227–249 is disordered; it reads HQPRESPPQDPDENPKPVLEPLK. 2 disulfide bridges follow: Cys-267/Cys-319 and Cys-362/Cys-412. Residues 517–615 enclose the Fibronectin type-III domain; that stretch reads PPGPPVMVEM…FNGSAHLVPT (99 aa). Ig-like domains lie at 720–800, 804–891, 902–982, 986–1075, 1078–1165, 1176–1261, 1266–1442, 1536–1621, 1625–1694, and 1702–1798; these read PQDK…FGVT, PPVH…FTVT, PSSE…FTIT, PPVR…VTVT, PERI…FNVS, PEAA…FNVQ, PPVK…ARLS, PVTI…ARLT, REVS…EDTG, and PAQS…ADTQ. 8 cysteine pairs are disulfide-bonded: Cys-738/Cys-788, Cys-829/Cys-879, Cys-920/Cys-970, Cys-1011/Cys-1061, Cys-1103/Cys-1153, Cys-1195/Cys-1245, Cys-1289/Cys-1430, and Cys-1558/Cys-1608.

Component of the 3M complex, composed of core components CUL7, CCDC8 and OBSL1. Interacts with CCDC8. Interacts with CUL7; the interaction is direct. Interacts with FBXW8. Interacts (via N-terminal Ig-like domain) with TTN/titin (via C-terminal Ig-like domain); the interaction is direct.

It localises to the cytoplasm. Its subcellular location is the perinuclear region. The protein resides in the golgi apparatus. Core component of the 3M complex, a complex required to regulate microtubule dynamics and genome integrity. It is unclear how the 3M complex regulates microtubules, it could act by controlling the level of a microtubule stabilizer. Acts as a regulator of the Cul7-RING(FBXW8) ubiquitin-protein ligase, playing a critical role in the ubiquitin ligase pathway that regulates Golgi morphogenesis and dendrite patterning in brain. Required to localize CUL7 to the Golgi apparatus in neurons. This is Obscurin-like protein 1 (Obsl1) from Mus musculus (Mouse).